Here is a 438-residue protein sequence, read N- to C-terminus: Proline--tRNA ligase (438 aa).

This sequence belongs to the class-II aminoacyl-tRNA synthetase family. ProS type 2 subfamily. As to quaternary structure, homodimer.

It localises to the cytoplasm. The catalysed reaction is tRNA(Pro) + L-proline + ATP = L-prolyl-tRNA(Pro) + AMP + diphosphate. Catalyzes the attachment of proline to tRNA(Pro) in a two-step reaction: proline is first activated by ATP to form Pro-AMP and then transferred to the acceptor end of tRNA(Pro). The polypeptide is Proline--tRNA ligase (Gluconobacter oxydans (strain 621H) (Gluconobacter suboxydans)).